The following is a 166-amino-acid chain: Shikimate kinase (166 aa).

11-16 (GSGKST) serves as a coordination point for ATP. Serine 15 contacts Mg(2+). The substrate site is built by aspartate 33, arginine 57, and glycine 79. Arginine 117 provides a ligand contact to ATP. Arginine 134 lines the substrate pocket.

Belongs to the shikimate kinase family. As to quaternary structure, monomer. Mg(2+) serves as cofactor.

The protein resides in the cytoplasm. The catalysed reaction is shikimate + ATP = 3-phosphoshikimate + ADP + H(+). The protein operates within metabolic intermediate biosynthesis; chorismate biosynthesis; chorismate from D-erythrose 4-phosphate and phosphoenolpyruvate: step 5/7. Functionally, catalyzes the specific phosphorylation of the 3-hydroxyl group of shikimic acid using ATP as a cosubstrate. This chain is Shikimate kinase, found in Sulfurihydrogenibium sp. (strain YO3AOP1).